Consider the following 495-residue polypeptide: Glycerol kinase (495 aa).

Residue threonine 11 participates in ADP binding. ATP is bound by residues threonine 11, threonine 12, and serine 13. Threonine 11 contacts sn-glycerol 3-phosphate. Position 15 (arginine 15) interacts with ADP. The sn-glycerol 3-phosphate site is built by arginine 81, glutamate 82, tyrosine 133, and aspartate 242. Arginine 81, glutamate 82, tyrosine 133, aspartate 242, and glutamine 243 together coordinate glycerol. Positions 264 and 307 each coordinate ADP. The ATP site is built by threonine 264, glycine 307, glutamine 311, and glycine 409. The ADP site is built by glycine 409 and asparagine 413.

The protein belongs to the FGGY kinase family.

The catalysed reaction is glycerol + ATP = sn-glycerol 3-phosphate + ADP + H(+). Its pathway is polyol metabolism; glycerol degradation via glycerol kinase pathway; sn-glycerol 3-phosphate from glycerol: step 1/1. With respect to regulation, inhibited by fructose 1,6-bisphosphate (FBP). In terms of biological role, key enzyme in the regulation of glycerol uptake and metabolism. Catalyzes the phosphorylation of glycerol to yield sn-glycerol 3-phosphate. This chain is Glycerol kinase, found in Borrelia hermsii (strain HS1 / DAH).